The sequence spans 300 residues: Cation-efflux pump FieF (300 aa).

Residues 24-44 (LLIKILAWWYTGSVSILAALV) form a helical membrane-spanning segment. Zn(2+)-binding residues include Asp45 and Asp49. 2 consecutive transmembrane segments (helical) span residues 82-102 (AALA…LTSI) and 114-134 (PGVG…LVTF). His153 and Asp157 together coordinate Zn(2+). A run of 2 helical transmembrane segments spans residues 156–176 (SDVM…YGWH) and 178–198 (ADAL…LRMG).

The protein belongs to the cation diffusion facilitator (CDF) transporter (TC 2.A.4) family. FieF subfamily. In terms of assembly, homodimer.

The protein localises to the cell inner membrane. It carries out the reaction Zn(2+)(in) + H(+)(out) = Zn(2+)(out) + H(+)(in). The enzyme catalyses Cd(2+)(in) + H(+)(out) = Cd(2+)(out) + H(+)(in). It catalyses the reaction Fe(2+)(in) + H(+)(out) = Fe(2+)(out) + H(+)(in). Functionally, divalent metal cation transporter which exports Zn(2+), Cd(2+) and possibly Fe(2+). May be involved in zinc and iron detoxification by efflux. This is Cation-efflux pump FieF from Salmonella agona (strain SL483).